A 471-amino-acid polypeptide reads, in one-letter code: GDP-fucose protein O-fucosyltransferase 3 (471 aa).

Over 1–8 (MNRMWEKK) the chain is Cytoplasmic. Residues 9–29 (FWISCFFIILFFILVTLQVMV) form a helical; Signal-anchor for type II membrane protein membrane-spanning segment. The Lumenal segment spans residues 30–471 (ELGRFEKRET…EFWNLVFKFQ (442 aa)). N-linked (GlcNAc...) asparagine glycans are attached at residues N102, N122, N160, and N310. A disulfide bridge connects residues C381 and C384. A glycan (N-linked (GlcNAc...) asparagine) is linked at N457.

This sequence belongs to the glycosyltransferase 10 family.

The protein resides in the endoplasmic reticulum membrane. The enzyme catalyses L-threonyl-[protein] + GDP-beta-L-fucose = 3-O-(alpha-L-fucosyl)-L-threonyl-[protein] + GDP + H(+). It catalyses the reaction L-seryl-[protein] + GDP-beta-L-fucose = 3-O-(alpha-L-fucosyl)-L-seryl-[protein] + GDP + H(+). It functions in the pathway protein modification; protein glycosylation. Functionally, protein O-fucosyltransferase that specifically catalyzes O-fucosylation of serine or threonine residues in EMI domains of target proteins. Attaches fucose through an O-glycosidic linkage. O-fucosylation of EMI domain-containing proteins may be required for facilitating protein folding and secretion. In Xenopus tropicalis (Western clawed frog), this protein is GDP-fucose protein O-fucosyltransferase 3 (fut10).